The following is a 630-amino-acid chain: Protein mono-ADP-ribosyltransferase PARP6 (630 aa).

The residue at position 237 (cysteine 237) is an ADP-ribosylcysteine. One can recognise a PARP catalytic domain in the interval 394–620; the sequence is EMTQGSYLEI…QDPKIQKEIM (227 aa). ADP-ribosyl aspartic acid is present on aspartate 600.

It belongs to the ARTD/PARP family. Auto-mono-ADP-ribosylated.

The enzyme catalyses L-aspartyl-[protein] + NAD(+) = 4-O-(ADP-D-ribosyl)-L-aspartyl-[protein] + nicotinamide. It catalyses the reaction L-cysteinyl-[protein] + NAD(+) = S-(ADP-D-ribosyl)-L-cysteinyl-[protein] + nicotinamide + H(+). Mono-ADP-ribosyltransferase that mediates mono-ADP-ribosylation of target proteins. The chain is Protein mono-ADP-ribosyltransferase PARP6 from Homo sapiens (Human).